Consider the following 618-residue polypeptide: UvrABC system protein C (618 aa).

Positions 13–92 (DKPGVYLMKN…IKKYRPKYNI (80 aa)) constitute a GIY-YIG domain. Residues 204-239 (LDIVENFKLNMEKAAENLEFEKAAMLRDKINIIEKI) enclose the UVR domain.

The protein belongs to the UvrC family. As to quaternary structure, interacts with UvrB in an incision complex.

The protein resides in the cytoplasm. Its function is as follows. The UvrABC repair system catalyzes the recognition and processing of DNA lesions. UvrC both incises the 5' and 3' sides of the lesion. The N-terminal half is responsible for the 3' incision and the C-terminal half is responsible for the 5' incision. The polypeptide is UvrABC system protein C (Clostridium botulinum (strain Loch Maree / Type A3)).